The chain runs to 473 residues: uncharacterized protein (473 aa).

Residues 1 to 86 (MSSSPTESEI…NTSNYGSSRD (86 aa)) are disordered. The segment covering 10 to 19 (ILPKESHNSI) has biased composition (basic and acidic residues). Composition is skewed to polar residues over residues 20–39 (DEQS…NSFN) and 55–68 (EPVQ…PNMA). Residue S64 is modified to Phosphoserine. The segment covering 69–83 (SNESGNSENTSNYGS) has biased composition (low complexity). 3 consecutive RRM domains span residues 95–165 (LWMG…NHLF), 188–260 (IFVG…PIRV), and 305–370 (VFVG…RIRL). The segment at 448–473 (MHIPENGNSDTMPVPNTQGKHLSAEE) is disordered. Polar residues predominate over residues 453 to 467 (NGNSDTMPVPNTQGK).

This is an uncharacterized protein from Schizosaccharomyces pombe (strain 972 / ATCC 24843) (Fission yeast).